We begin with the raw amino-acid sequence, 505 residues long: Glycerol kinase (505 aa).

Threonine 12 contributes to the ADP binding site. ATP contacts are provided by threonine 12, threonine 13, and serine 14. Residue threonine 12 participates in sn-glycerol 3-phosphate binding. Arginine 16 contacts ADP. Arginine 82, glutamate 83, tyrosine 134, and aspartate 246 together coordinate sn-glycerol 3-phosphate. 5 residues coordinate glycerol: arginine 82, glutamate 83, tyrosine 134, aspartate 246, and glutamine 247. Residues threonine 268 and glycine 312 each coordinate ADP. The ATP site is built by threonine 268, glycine 312, glutamine 316, and glycine 413. ADP-binding residues include glycine 413 and asparagine 417.

Belongs to the FGGY kinase family.

It carries out the reaction glycerol + ATP = sn-glycerol 3-phosphate + ADP + H(+). The protein operates within polyol metabolism; glycerol degradation via glycerol kinase pathway; sn-glycerol 3-phosphate from glycerol: step 1/1. With respect to regulation, inhibited by fructose 1,6-bisphosphate (FBP). Functionally, key enzyme in the regulation of glycerol uptake and metabolism. Catalyzes the phosphorylation of glycerol to yield sn-glycerol 3-phosphate. In Beutenbergia cavernae (strain ATCC BAA-8 / DSM 12333 / CCUG 43141 / JCM 11478 / NBRC 16432 / NCIMB 13614 / HKI 0122), this protein is Glycerol kinase.